A 328-amino-acid polypeptide reads, in one-letter code: Nickel import system permease protein NikB (328 aa).

The next 6 helical transmembrane spans lie at 11–31 (LMQM…LMKL), 104–124 (LLIS…LGII), 139–159 (VIST…LLFI), 170–190 (ILSQ…AYII), 229–249 (ILPI…GTVV), and 279–299 (VLFI…LTLL). Positions 100-297 (APITLLISFS…IINTIADLLT (198 aa)) constitute an ABC transmembrane type-1 domain.

It belongs to the binding-protein-dependent transport system permease family. OppBC subfamily. As to quaternary structure, the complex is composed of two ATP-binding proteins (NikD and NikE), two transmembrane proteins (NikB and NikC) and a solute-binding protein (NikA).

The protein localises to the cell membrane. In terms of biological role, part of the ABC transporter complex NikABCDE (Opp2) involved in nickel import. Probably responsible for the translocation of the substrate across the membrane. The polypeptide is Nickel import system permease protein NikB (Staphylococcus aureus (strain USA300)).